The sequence spans 472 residues: 3-isopropylmalate dehydratase large subunit (472 aa).

Residues 289-312 (TWGTNPAQGTGVSQVVPSPDDAKD) are disordered. The segment covering 290-304 (WGTNPAQGTGVSQVV) has biased composition (polar residues). [4Fe-4S] cluster is bound by residues Cys-347, Cys-407, and Cys-410.

The protein belongs to the aconitase/IPM isomerase family. LeuC type 1 subfamily. As to quaternary structure, heterodimer of LeuC and LeuD. It depends on [4Fe-4S] cluster as a cofactor.

The catalysed reaction is (2R,3S)-3-isopropylmalate = (2S)-2-isopropylmalate. The protein operates within amino-acid biosynthesis; L-leucine biosynthesis; L-leucine from 3-methyl-2-oxobutanoate: step 2/4. In terms of biological role, catalyzes the isomerization between 2-isopropylmalate and 3-isopropylmalate, via the formation of 2-isopropylmaleate. This Halalkalibacterium halodurans (strain ATCC BAA-125 / DSM 18197 / FERM 7344 / JCM 9153 / C-125) (Bacillus halodurans) protein is 3-isopropylmalate dehydratase large subunit.